Here is a 160-residue protein sequence, read N- to C-terminus: Ribosomal RNA large subunit methyltransferase H (160 aa).

Residues L76, G108, and 127 to 132 (LGKMTW) contribute to the S-adenosyl-L-methionine site.

The protein belongs to the RNA methyltransferase RlmH family. As to quaternary structure, homodimer.

Its subcellular location is the cytoplasm. The catalysed reaction is pseudouridine(1915) in 23S rRNA + S-adenosyl-L-methionine = N(3)-methylpseudouridine(1915) in 23S rRNA + S-adenosyl-L-homocysteine + H(+). In terms of biological role, specifically methylates the pseudouridine at position 1915 (m3Psi1915) in 23S rRNA. The chain is Ribosomal RNA large subunit methyltransferase H from Sinorhizobium medicae (strain WSM419) (Ensifer medicae).